We begin with the raw amino-acid sequence, 365 residues long: D-alanine--D-alanine ligase (365 aa).

Residues 135 to 345 enclose the ATP-grasp domain; the sequence is KLLLKSFNIP…YESLVDNLVS (211 aa). 168 to 223 contacts ATP; it reads KQSLNYPVIVKPAMLGSSIGISIAYNDTQIEKCIEEAFEYDLTVVVEKFMKVREIE. Residues Asp-298, Glu-312, and Asn-314 each contribute to the Mg(2+) site.

It belongs to the D-alanine--D-alanine ligase family. The cofactor is Mg(2+). Mn(2+) is required as a cofactor.

It localises to the cytoplasm. It carries out the reaction 2 D-alanine + ATP = D-alanyl-D-alanine + ADP + phosphate + H(+). It functions in the pathway cell wall biogenesis; peptidoglycan biosynthesis. In terms of biological role, cell wall formation. The chain is D-alanine--D-alanine ligase from Borrelia hermsii (strain HS1 / DAH).